A 145-amino-acid polypeptide reads, in one-letter code: Cytochrome b (145 aa).

Residues Phe38 to Ile58 form a helical membrane-spanning segment. Residues His42 and His56 each coordinate heme b. His61 provides a ligand contact to a ubiquinone. The chain crosses the membrane as a helical span at residues Phe85–Phe105.

Belongs to the cytochrome b family. In terms of assembly, fungal cytochrome b-c1 complex contains 10 subunits; 3 respiratory subunits, 2 core proteins and 5 low-molecular weight proteins. Cytochrome b-c1 complex is a homodimer. The cofactor is heme b.

The protein localises to the mitochondrion inner membrane. Functionally, component of the ubiquinol-cytochrome c reductase complex (complex III or cytochrome b-c1 complex) that is part of the mitochondrial respiratory chain. The b-c1 complex mediates electron transfer from ubiquinol to cytochrome c. Contributes to the generation of a proton gradient across the mitochondrial membrane that is then used for ATP synthesis. This is Cytochrome b (cob) from Aspergillus fumigatus (Neosartorya fumigata).